A 415-amino-acid polypeptide reads, in one-letter code: Exodeoxyribonuclease 7 large subunit (415 aa).

The protein belongs to the XseA family. In terms of assembly, heterooligomer composed of large and small subunits.

It localises to the cytoplasm. The enzyme catalyses Exonucleolytic cleavage in either 5'- to 3'- or 3'- to 5'-direction to yield nucleoside 5'-phosphates.. In terms of biological role, bidirectionally degrades single-stranded DNA into large acid-insoluble oligonucleotides, which are then degraded further into small acid-soluble oligonucleotides. In Mycobacterium bovis (strain ATCC BAA-935 / AF2122/97), this protein is Exodeoxyribonuclease 7 large subunit.